Consider the following 139-residue polypeptide: MSGRGKAVSKTRAKAKTRSSRAGLQFPVGRVHRLLRKGNYAHRVGAGAPVYLAAVLEYLTAEILELAGNAARDNKKSRIIPRHLQLAVRNDEELNKLLGGVTIAQGGVLPNIQAVLLPKKSSGGVSTSGKKSSQQSQEY.

2 disordered regions span residues 1–21 (MSGR…RSSR) and 119–139 (KKSS…SQEY). Ser-2 carries the post-translational modification N-acetylserine. Phosphoserine is present on Ser-2. Positions 7–19 (AVSKTRAKAKTRS) are enriched in basic residues. Lys-10 carries the post-translational modification N6-lactoyllysine; alternate. Residues Lys-14, Lys-16, and Lys-120 each participate in a glycyl lysine isopeptide (Lys-Gly) (interchain with G-Cter in ubiquitin) cross-link. Ser-136 carries the post-translational modification Phosphoserine. The [ST]-Q motif motif lies at 136 to 137 (SQ). Tyr-139 is modified (phosphotyrosine; by WSTF).

This sequence belongs to the histone H2A family. In terms of assembly, the nucleosome is a histone octamer containing two molecules each of H2A, H2B, H3 and H4 assembled in one H3-H4 heterotetramer and two H2A-H2B heterodimers. The octamer wraps approximately 147 bp of DNA. Interacts with numerous proteins required for DNA damage signaling and repair when phosphorylated on Ser-136. In terms of processing, phosphorylated. Phosphorylation of Ser-136 (H2AX139ph) occurs in response to DNA double strand breaks (DSBs) generated by exogenous genotoxic agents, by stalled replication forks and by meiotic recombination events. Phosphorylation is dependent on the DNA damage checkpoint kinases ATR and ATM, spreads on either side of a detected DSB site and may mark the surrounding chromatin for recruitment of proteins required for DNA damage signaling and repair. Widespread phosphorylation may also serve to amplify the damage signal or aid repair of persistent lesions. Dephosphorylation of Ser-136 is required for DNA DSB repair. Phosphorylation at Tyr-139 (H2AXY142ph) by baz1b/wstf determines the relative recruitment of either DNA repair or pro-apoptotic factors. Phosphorylation at Tyr-139 (H2AXY142ph) favors the recruitment of pro-apoptosis factors. In contrast, dephosphorylation of Tyr-139 by EYA proteins (eya1, eya2, eya3 or eya4) favors the recruitment of MDC1-containing DNA repair complexes to the tail of phosphorylated Ser-136 (H2AX139ph). Phosphorylated by VRK1. Monoubiquitination of Lys-120 (H2AXK119ub) by ring1 and rnf2/ring2 complex gives a specific tag for epigenetic transcriptional repression. Following DNA double-strand breaks (DSBs), it is ubiquitinated through 'Lys-63' linkage of ubiquitin moieties by the E2 ligase ube2n and the E3 ligases rnf8 and rnf168, leading to the recruitment of repair proteins to sites of DNA damage. Ubiquitination at Lys-14 and Lys-16 (H2AK13Ub and H2AK15Ub, respectively) in response to DNA damage is initiated by rnf168 that mediates monoubiquitination at these 2 sites, and 'Lys-63'-linked ubiquitin are then conjugated to monoubiquitin; rnf8 is able to extend 'Lys-63'-linked ubiquitin chains in vitro. H2AK119Ub and ionizing radiation-induced 'Lys-63'-linked ubiquitination (H2AK13Ub and H2AK15Ub) are distinct events.

It localises to the nucleus. It is found in the chromosome. Variant histone H2A which replaces conventional H2A in a subset of nucleosomes. Nucleosomes wrap and compact DNA into chromatin, limiting DNA accessibility to the cellular machineries which require DNA as a template. Histones thereby play a central role in transcription regulation, DNA repair, DNA replication and chromosomal stability. DNA accessibility is regulated via a complex set of post-translational modifications of histones, also called histone code, and nucleosome remodeling. Required for checkpoint-mediated arrest of cell cycle progression in response to low doses of ionizing radiation and for efficient repair of DNA double strand breaks (DSBs) specifically when modified by C-terminal phosphorylation. The chain is Histone H2AX (h2ax) from Xenopus laevis (African clawed frog).